Reading from the N-terminus, the 397-residue chain is Chorismate synthase (397 aa).

NADP(+) is bound by residues Arg-40 and Arg-46. Residues 129-131 (RSS), 257-258 (QA), Gly-302, 317-321 (KPISS), and Arg-343 each bind FMN.

Belongs to the chorismate synthase family. As to quaternary structure, homotetramer. FMNH2 serves as cofactor.

It catalyses the reaction 5-O-(1-carboxyvinyl)-3-phosphoshikimate = chorismate + phosphate. The protein operates within metabolic intermediate biosynthesis; chorismate biosynthesis; chorismate from D-erythrose 4-phosphate and phosphoenolpyruvate: step 7/7. Its function is as follows. Catalyzes the anti-1,4-elimination of the C-3 phosphate and the C-6 proR hydrogen from 5-enolpyruvylshikimate-3-phosphate (EPSP) to yield chorismate, which is the branch point compound that serves as the starting substrate for the three terminal pathways of aromatic amino acid biosynthesis. This reaction introduces a second double bond into the aromatic ring system. The sequence is that of Chorismate synthase from Pelodictyon phaeoclathratiforme (strain DSM 5477 / BU-1).